The chain runs to 297 residues: N-acetylneuraminate lyase (297 aa).

Positions 47 and 48 each coordinate aceneuramate. Tyr-137 acts as the Proton donor in catalysis. Lys-165 acts as the Schiff-base intermediate with substrate in catalysis. 5 residues coordinate aceneuramate: Thr-167, Gly-189, Asp-191, Glu-192, and Ser-208.

The protein belongs to the DapA family. NanA subfamily. As to quaternary structure, homotetramer.

It localises to the cytoplasm. It catalyses the reaction aceneuramate = aldehydo-N-acetyl-D-mannosamine + pyruvate. It participates in amino-sugar metabolism; N-acetylneuraminate degradation; D-fructose 6-phosphate from N-acetylneuraminate: step 1/5. In terms of biological role, catalyzes the reversible aldol cleavage of N-acetylneuraminic acid (sialic acid; Neu5Ac) to form pyruvate and N-acetylmannosamine (ManNAc) via a Schiff base intermediate. In Salmonella choleraesuis (strain SC-B67), this protein is N-acetylneuraminate lyase.